Here is a 300-residue protein sequence, read N- to C-terminus: uncharacterized protein (300 aa).

4 CBS domains span residues 10–68 (RFPP…FRDV), 88–148 (FLKY…HVKV), 152–207 (MTSE…EDVL), and 226–284 (ISSK…GVEI).

This is an uncharacterized protein from Thermofilum pendens.